We begin with the raw amino-acid sequence, 123 residues long: Large ribosomal subunit protein uL14 (123 aa).

The protein belongs to the universal ribosomal protein uL14 family. As to quaternary structure, part of the 50S ribosomal subunit. Forms a cluster with proteins L3 and L19. In the 70S ribosome, L14 and L19 interact and together make contacts with the 16S rRNA in bridges B5 and B8.

Functionally, binds to 23S rRNA. Forms part of two intersubunit bridges in the 70S ribosome. The sequence is that of Large ribosomal subunit protein uL14 from Corynebacterium jeikeium (strain K411).